We begin with the raw amino-acid sequence, 54 residues long: Rubredoxin (54 aa).

The Rubredoxin-like domain occupies 2–52 (AKWVCKICGYIYDEDAGDPDNGISPGTKFEELPDDWVCPICGAPKSEFEKL). Fe cation-binding residues include Cys-6, Cys-9, Cys-39, and Cys-42.

This sequence belongs to the rubredoxin family. Requires Fe(3+) as cofactor.

In terms of biological role, rubredoxin is a small nonheme, iron protein lacking acid-labile sulfide. Its single Fe, chelated to 4 Cys, functions as an electron acceptor and may also stabilize the conformation of the molecule. The chain is Rubredoxin (rub) from Pyrococcus furiosus (strain ATCC 43587 / DSM 3638 / JCM 8422 / Vc1).